We begin with the raw amino-acid sequence, 330 residues long: Nitrilase 3 (330 aa).

The CN hydrolase domain maps to 4 to 273; it reads VKAAAVQISP…EGEVIVDLDF (270 aa). The active-site Proton acceptor is Glu-44. Lys-128 functions as the Proton donor in the catalytic mechanism. Cys-162 functions as the Nucleophile in the catalytic mechanism. The interval 310-330 is disordered; sequence RAAHPVSGAEQGPEDLRTPAA.

Belongs to the carbon-nitrogen hydrolase superfamily. Nitrilase family.

It catalyses the reaction a nitrile + 2 H2O = a carboxylate + NH4(+). Functionally, nitrilases catalyze the mild hydrolytic conversion of organonitriles directly to the corresponding carboxylic acids. In Unknown prokaryotic organism, this protein is Nitrilase 3.